Here is a 601-residue protein sequence, read N- to C-terminus: Putative ankyrin repeat protein R841 (601 aa).

12 ANK repeats span residues 17 to 50 (NNITSLMLAVSNYEIHDNYDTVKSLIDCGFDVNA), 54 to 86 (HGKSVLMYAINIDSDKNINVIKLLIDHGADVNH), 91 to 123 (QRSVLIHTCMYMEYGYNNKTISLLIDKGANINY), 165 to 197 (RENILMRIIKKLDNKYSITTIKLLLEHGINIDH), 201 to 234 (YGQTALMYACIYINGLKNIPIIKLLLEYGANINS), 238 to 269 (KGWSPLMSVFKNDIIDIKTIKFLVEKGAEINS), 274 to 310 (NETMLYVFCKKLSTRIYGQACVKIFDFLIKKGISIDN), 314 to 349 (KGYTPLMAFIIKISEYNEYTEKFIKLLLDYGANINS), 361 to 390 (VCCDVVSGSVSHCKIEIINTLIKYGADVNS), 397 to 427 (TILMNLRYSIHSENYITVLEILLRNGANPNI), 432 to 463 (YHKFPLLIDILNRGGELRIIKLMLQYNIDPNI), and 467 to 500 (IGNNALLFVAKHYKKNERFSFLKLLLTYGASYNC).

The polypeptide is Putative ankyrin repeat protein R841 (Acanthamoeba polyphaga mimivirus (APMV)).